The primary structure comprises 122 residues: Ribonuclease P protein component (122 aa).

This sequence belongs to the RnpA family. Consists of a catalytic RNA component (M1 or rnpB) and a protein subunit.

It catalyses the reaction Endonucleolytic cleavage of RNA, removing 5'-extranucleotides from tRNA precursor.. RNaseP catalyzes the removal of the 5'-leader sequence from pre-tRNA to produce the mature 5'-terminus. It can also cleave other RNA substrates such as 4.5S RNA. The protein component plays an auxiliary but essential role in vivo by binding to the 5'-leader sequence and broadening the substrate specificity of the ribozyme. The protein is Ribonuclease P protein component of Shouchella clausii (strain KSM-K16) (Alkalihalobacillus clausii).